Reading from the N-terminus, the 86-residue chain is High affinity immunoglobulin epsilon receptor subunit gamma (86 aa).

An N-terminal signal peptide occupies residues 1-18; that stretch reads MIPAVVLLLLLLVEQAAA. Over 19–23 the chain is Extracellular; sequence LGEPQ. The chain crosses the membrane as a helical span at residues 24 to 44; the sequence is LCYILDAILFLYGIVLTLLYC. Topologically, residues 45–86 are cytoplasmic; the sequence is RLKLQVRKAAIDSYEKSDGVYTGLSTRNQETYETLKHEKPPQ. Residues 54-82 enclose the ITAM domain; it reads AIDSYEKSDGVYTGLSTRNQETYETLKHE. Phosphotyrosine is present on Y65. Position 69 is a phosphoserine (S69). Y76 is modified (phosphotyrosine). A Phosphothreonine modification is found at T78.

It belongs to the CD3Z/FCER1G family. In terms of assembly, igE Fc receptor is a tetramer of an alpha chain, a beta chain, and two disulfide linked gamma chains. Associates with FCGR1A; forms a functional signaling complex. The signaling subunit of immunoglobulin gamma (IgG) Fc receptor complex. As a homodimer or a heterodimer of CD247 and FCER1G, associates with the ligand binding subunit FCGR3A to form a functional receptor complex. Associates with CLEC6A. Interacts with CLEC4E. Interacts (via ITAM domain) with SYK (via SH2 domains); activates SYK, enabling integrin-mediated activation of neutrophils and macrophages. Interacts with common beta chain of interleukin 3 receptor CSF2RB and recruits SYK in response to IL3 stimulation; this interaction is direct. Interacts with CD300LH; the interaction may be indirect. Interacts with CD300LD. Interacts with TARM1.

The protein resides in the cell membrane. Functionally, adapter protein containing an immunoreceptor tyrosine-based activation motif (ITAM) that transduces activation signals from various immunoreceptors. As a component of the high-affinity immunoglobulin E (IgE) receptor, mediates allergic inflammatory signaling in mast cells. As a constitutive component of interleukin-3 receptor complex, selectively mediates interleukin 4/IL4 production b basophils priming T-cells toward effector T-helper 2 subset. Associates with pattern recognition receptors CLEC4D and CLEC4E to form a functional signaling complex in myeloid cells. Binding of mycobacterial trehalose 6,6'-dimycolate (TDM) to this receptor complex leads to phosphorylation of ITAM, triggering activation of SYK, CARD9 and NF-kappa-B, consequently driving maturation of antigen-presenting cells and shaping antigen-specific priming of T-cells toward effector T-helper 1 and T-helper 17 cell subtypes. May function cooperatively with other activating receptors. Functionally linked to integrin beta-2/ITGB2-mediated neutrophil activation. Also involved in integrin alpha-2/ITGA2-mediated platelet activation. The sequence is that of High affinity immunoglobulin epsilon receptor subunit gamma (FCER1G) from Sus scrofa (Pig).